A 229-amino-acid chain; its full sequence is Enolase-phosphatase E1 (229 aa).

The span at 208–218 (DTQSTHRQVSS) shows a compositional bias: polar residues. The disordered stretch occupies residues 208–229 (DTQSTHRQVSSFDDIHPEQIPT). A compositionally biased stretch (basic and acidic residues) spans 220–229 (DDIHPEQIPT).

This sequence belongs to the HAD-like hydrolase superfamily. MasA/MtnC family. In terms of assembly, monomer. The cofactor is Mg(2+).

The enzyme catalyses 5-methylsulfanyl-2,3-dioxopentyl phosphate + H2O = 1,2-dihydroxy-5-(methylsulfanyl)pent-1-en-3-one + phosphate. Its pathway is amino-acid biosynthesis; L-methionine biosynthesis via salvage pathway; L-methionine from S-methyl-5-thio-alpha-D-ribose 1-phosphate: step 3/6. The protein operates within amino-acid biosynthesis; L-methionine biosynthesis via salvage pathway; L-methionine from S-methyl-5-thio-alpha-D-ribose 1-phosphate: step 4/6. Bifunctional enzyme that catalyzes the enolization of 2,3-diketo-5-methylthiopentyl-1-phosphate (DK-MTP-1-P) into the intermediate 2-hydroxy-3-keto-5-methylthiopentenyl-1-phosphate (HK-MTPenyl-1-P), which is then dephosphorylated to form the acireductone 1,2-dihydroxy-3-keto-5-methylthiopentene (DHK-MTPene). This is Enolase-phosphatase E1 from Cronobacter sakazakii (Enterobacter sakazakii).